Consider the following 334-residue polypeptide: Methionine adenosyltransferase 2 subunit beta (334 aa).

NADP(+) contacts are provided by residues T37–L40, F60–R62, N71–L72, C93, R97, Y159, and L185. The residue at position 309 (T309) is a Phosphothreonine. The interval L319 to H334 is required for interaction with MAT2A.

Belongs to the dTDP-4-dehydrorhamnose reductase family. MAT2B subfamily. In terms of assembly, heterotrimer; composed of a catalytic MAT2A homodimer that binds one regulatory MAT2B chain. Heterohexamer; composed of a central, catalytic MAT2A homotetramer flanked on either side by a regulatory MAT2B chain. NADP binding increases the affinity for MAT2A.

Its pathway is amino-acid biosynthesis; S-adenosyl-L-methionine biosynthesis; S-adenosyl-L-methionine from L-methionine: step 1/1. Regulatory subunit of S-adenosylmethionine synthetase 2, an enzyme that catalyzes the formation of S-adenosylmethionine from methionine and ATP. Regulates MAT2A catalytic activity by changing its kinetic properties, increasing its affinity for L-methionine. Can bind NADP (in vitro). The polypeptide is Methionine adenosyltransferase 2 subunit beta (MAT2B) (Bos taurus (Bovine)).